Here is a 43-residue protein sequence, read N- to C-terminus: METATIIVIFVSSLLVGITAYSVYTAFGPASKNLRDPFEEHED.

The chain crosses the membrane as a helical span at residues 4–24 (ATIIVIFVSSLLVGITAYSVY).

Belongs to the PsbN family.

It localises to the plastid. It is found in the chloroplast thylakoid membrane. May play a role in photosystem I and II biogenesis. The protein is Protein PsbN of Thalassiosira pseudonana (Marine diatom).